The sequence spans 307 residues: Malate dehydrogenase (307 aa).

NAD(+) is bound by residues 8–13 (GAGNVG) and aspartate 32. Positions 81 and 87 each coordinate substrate. NAD(+) contacts are provided by residues asparagine 94 and 117–119 (VSN). Substrate contacts are provided by asparagine 119 and arginine 150. Histidine 174 functions as the Proton acceptor in the catalytic mechanism.

Belongs to the LDH/MDH superfamily. MDH type 3 family.

The enzyme catalyses (S)-malate + NAD(+) = oxaloacetate + NADH + H(+). In terms of biological role, catalyzes the reversible oxidation of malate to oxaloacetate. This is Malate dehydrogenase from Dehalococcoides mccartyi (strain CBDB1).